Here is a 464-residue protein sequence, read N- to C-terminus: MLDMSEARAQPPCSPSGTASSMSHVEDSDSDAPPSPAGSEGLGRAGGGGRGDTAEAADERFPACIRDAVSQVLKGYDWSLVPMPVRGGGGGTLKAKPHVKRPMNAFMVWAQAARRKLADQYPHLHNAELSKTLGKLWRLLSESEKRPFVEEAERLRVQHKKDHPDYKYQPRRRKSVKTGRSDSDSGTELGHHPGGPMYKADAVLGEAHHHSDHHTGQTHGPPTPPTTPKTDLHQASNGSKQELRLEGRRLVDSGRQNIDFSNVDISELSSEVISNMDTFDVHEFDQYLPLNGHSALPTEPSQATASGSYGGASYSHSGATGIGASPVWAHKGAPSASASPTEAGPLRPQIKTEQLSPSHYNDQSHGSPGRADYGSYSAQASVTTAASATAASSFASAQCDYTDLQASNYYSPYPGYPPSLYQYPYFHSSRRPYASPLLNGLSMPPAHSPSSNWDQPVYTTLTRP.

Disordered stretches follow at residues 1-55, 154-244, 292-315, and 354-374; these read MLDM…DTAE, RLRV…QELR, GHSA…ASYS, and QLSP…ADYG. Positions 40–51 are enriched in gly residues; it reads EGLGRAGGGGRG. The segment at 55-97 is dimerization (DIM); the sequence is EAADERFPACIRDAVSQVLKGYDWSLVPMPVRGGGGGTLKAKP. A DNA-binding region (HMG box) is located at residues 99–167; sequence VKRPMNAFMV…QHKKDHPDYK (69 aa). Composition is skewed to basic and acidic residues over residues 154–168 and 206–215; these read RLRV…DYKY and EAHHHSDHHT. The tract at residues 221 to 299 is transactivation domain (TAM); sequence PPTPPTTPKT…LNGHSALPTE (79 aa). Positions 303 to 315 are enriched in low complexity; sequence ATASGSYGGASYS. A transactivation domain (TAC) region spans residues 347 to 464; it reads RPQIKTEQLS…QPVYTTLTRP (118 aa). Over residues 354–366 the composition is skewed to polar residues; it reads QLSPSHYNDQSHG. The short motif at 418-426 is the 9aaTAD element; that stretch reads PSLYQYPYF. The segment at 444–464 is disordered; it reads PPAHSPSSNWDQPVYTTLTRP. The span at 448–464 shows a compositional bias: polar residues; the sequence is SPSSNWDQPVYTTLTRP.

Brain, gut, limb, and testes. Slightly in liver, ovaries, spinal cord, lung and heart.

It is found in the nucleus. Transcription factor that may play a role in central nervous system, limb and facial development. May be involved in male sex determination. Binds the consensus motif 5'-[AT][AT]CAA[AT]G-3'. This chain is Transcription factor SOX-8, found in Mus musculus (Mouse).